The sequence spans 419 residues: CinA-like protein (419 aa).

Belongs to the CinA family.

The polypeptide is CinA-like protein (Parasynechococcus marenigrum (strain WH8102)).